The chain runs to 405 residues: Pre-mRNA-splicing factor cwc-24 (405 aa).

2 disordered regions span residues 1-114 and 162-184; these read MADT…NTIY and TKKK…DGTY. Residues 15 to 29 are compositionally biased toward low complexity; the sequence is EPTTATPTAPIAPVA. The segment covering 31-46 has biased composition (basic residues); it reads FKKRGAKGKANLRKRP. Acidic residues predominate over residues 56–70; that stretch reads SDDDSSDFESSEDEA. The span at 74 to 83 shows a compositional bias: basic residues; it reads RIKRRKKNHH. The C3H1-type zinc finger occupies 221 to 249; that stretch reads DMAPDVCKDYKQTGFCGFGDNCKFLHARE. The RING-type zinc finger occupies 310 to 349; sequence CIICRGPYSNSPVVTRCGHYFCEACALKRYRKDPSCAACG. A compositionally biased stretch (basic and acidic residues) spans 370–386; the sequence is KARAERLRREARERGEE. The interval 370-405 is disordered; that stretch reads KARAERLRREARERGEEVSEEEDEGEDEGEGAEGSD. Over residues 387-405 the composition is skewed to acidic residues; it reads VSEEEDEGEDEGEGAEGSD.

This sequence belongs to the CWC24 family. Associated with the spliceosome.

It is found in the nucleus. Its function is as follows. Involved in pre-mRNA splicing. The chain is Pre-mRNA-splicing factor cwc-24 (cwc-24) from Neurospora crassa (strain ATCC 24698 / 74-OR23-1A / CBS 708.71 / DSM 1257 / FGSC 987).